An 87-amino-acid polypeptide reads, in one-letter code: MVNTKASMFLTFAGLVLLFVVCYASESEEKEFPKEMLSSIFAVDNDFKQEERDCAGYMRECKEKLCCSGYVCSSRWKWCVLPAPWRR.

An N-terminal signal peptide occupies residues 1 to 24 (MVNTKASMFLTFAGLVLLFVVCYA). The propeptide occupies 25–52 (SESEEKEFPKEMLSSIFAVDNDFKQEER). Cystine bridges form between Cys-54-Cys-67, Cys-61-Cys-72, and Cys-66-Cys-79.

The protein belongs to the neurotoxin 10 (Hwtx-1) family. 51 (Hntx-8) subfamily. Hntx-8 sub-subfamily. As to expression, expressed by the venom gland.

It is found in the secreted. Ion channel inhibitor. This is U3-theraphotoxin-Hhn1a 18 from Cyriopagopus hainanus (Chinese bird spider).